Consider the following 203-residue polypeptide: Pyrrolidone-carboxylate peptidase 1 (203 aa).

Catalysis depends on residues Glu78, Cys141, and His165.

It belongs to the peptidase C15 family. As to quaternary structure, homotetramer.

It localises to the cytoplasm. It catalyses the reaction Release of an N-terminal pyroglutamyl group from a polypeptide, the second amino acid generally not being Pro.. Functionally, removes 5-oxoproline from various penultimate amino acid residues except L-proline. This Caldanaerobacter subterraneus subsp. tengcongensis (strain DSM 15242 / JCM 11007 / NBRC 100824 / MB4) (Thermoanaerobacter tengcongensis) protein is Pyrrolidone-carboxylate peptidase 1.